Reading from the N-terminus, the 123-residue chain is Small ribosomal subunit protein uS12c (123 aa).

Belongs to the universal ribosomal protein uS12 family. As to quaternary structure, part of the 30S ribosomal subunit.

Its subcellular location is the plastid. It is found in the chloroplast. In terms of biological role, with S4 and S5 plays an important role in translational accuracy. Located at the interface of the 30S and 50S subunits. This Chlorokybus atmophyticus (Soil alga) protein is Small ribosomal subunit protein uS12c (rps12).